A 373-amino-acid polypeptide reads, in one-letter code: Anhydro-N-acetylmuramic acid kinase (373 aa).

Residue 12-19 (GTSLDGVD) participates in ATP binding.

The protein belongs to the anhydro-N-acetylmuramic acid kinase family.

The catalysed reaction is 1,6-anhydro-N-acetyl-beta-muramate + ATP + H2O = N-acetyl-D-muramate 6-phosphate + ADP + H(+). It functions in the pathway amino-sugar metabolism; 1,6-anhydro-N-acetylmuramate degradation. Its pathway is cell wall biogenesis; peptidoglycan recycling. Catalyzes the specific phosphorylation of 1,6-anhydro-N-acetylmuramic acid (anhMurNAc) with the simultaneous cleavage of the 1,6-anhydro ring, generating MurNAc-6-P. Is required for the utilization of anhMurNAc either imported from the medium or derived from its own cell wall murein, and thus plays a role in cell wall recycling. The protein is Anhydro-N-acetylmuramic acid kinase of Salmonella dublin (strain CT_02021853).